The sequence spans 214 residues: MHLALFGATFDPPHNGHLALCLFARELLGIDKLIVSVSNNPFKPESGRADVHRMRMAELLTQEINLTGAFSEVSGWELEKKQPSYTVDLLRYLRTLYPADKLTLLVGEDSFREFSKWKESETFCSLSDVVVFRRVSTQSESTPRPEIIPCEACISFVNFACDISSTLVRSVVASGRSISTLVPPSVHRYIMEYGLYAGEEHHATSIPEPKPRES.

This sequence belongs to the NadD family.

It carries out the reaction nicotinate beta-D-ribonucleotide + ATP + H(+) = deamido-NAD(+) + diphosphate. The protein operates within cofactor biosynthesis; NAD(+) biosynthesis; deamido-NAD(+) from nicotinate D-ribonucleotide: step 1/1. Its function is as follows. Catalyzes the reversible adenylation of nicotinate mononucleotide (NaMN) to nicotinic acid adenine dinucleotide (NaAD). This chain is Probable nicotinate-nucleotide adenylyltransferase, found in Pelodictyon phaeoclathratiforme (strain DSM 5477 / BU-1).